The chain runs to 310 residues: tRNA dimethylallyltransferase (310 aa).

11-18 (GPTGVGKT) lines the ATP pocket. Residue 13–18 (TGVGKT) participates in substrate binding.

The protein belongs to the IPP transferase family. As to quaternary structure, monomer. Requires Mg(2+) as cofactor.

The enzyme catalyses adenosine(37) in tRNA + dimethylallyl diphosphate = N(6)-dimethylallyladenosine(37) in tRNA + diphosphate. Its function is as follows. Catalyzes the transfer of a dimethylallyl group onto the adenine at position 37 in tRNAs that read codons beginning with uridine, leading to the formation of N6-(dimethylallyl)adenosine (i(6)A). This is tRNA dimethylallyltransferase from Latilactobacillus sakei subsp. sakei (strain 23K) (Lactobacillus sakei subsp. sakei).